The sequence spans 342 residues: S-adenosylmethionine:tRNA ribosyltransferase-isomerase (342 aa).

Belongs to the QueA family. In terms of assembly, monomer.

It is found in the cytoplasm. It catalyses the reaction 7-aminomethyl-7-carbaguanosine(34) in tRNA + S-adenosyl-L-methionine = epoxyqueuosine(34) in tRNA + adenine + L-methionine + 2 H(+). The protein operates within tRNA modification; tRNA-queuosine biosynthesis. Transfers and isomerizes the ribose moiety from AdoMet to the 7-aminomethyl group of 7-deazaguanine (preQ1-tRNA) to give epoxyqueuosine (oQ-tRNA). The polypeptide is S-adenosylmethionine:tRNA ribosyltransferase-isomerase (Streptococcus agalactiae serotype V (strain ATCC BAA-611 / 2603 V/R)).